Reading from the N-terminus, the 543-residue chain is CTP synthase (543 aa).

The amidoligase domain stretch occupies residues 1–265 (MARYIFITGG…DEEVLAAFGI (265 aa)). Ser-13 contacts CTP. Ser-13 is a binding site for UTP. Residue 14-19 (SLGKGL) coordinates ATP. Tyr-54 lines the L-glutamine pocket. Asp-71 is a binding site for ATP. Asp-71 and Glu-139 together coordinate Mg(2+). Residues 146–148 (DIE), 186–191 (KTKPTQ), and Lys-222 each bind CTP. Residues 186 to 191 (KTKPTQ) and Lys-222 contribute to the UTP site. 238 to 240 (RDA) provides a ligand contact to ATP. One can recognise a Glutamine amidotransferase type-1 domain in the interval 291 to 542 (TIAIVGKYTG…IEAAMAQSRL (252 aa)). Gly-353 is a binding site for L-glutamine. Cys-380 (nucleophile; for glutamine hydrolysis) is an active-site residue. L-glutamine is bound by residues 381–384 (FGMQ), Glu-404, and Arg-470. Residues His-515 and Glu-517 contribute to the active site.

This sequence belongs to the CTP synthase family. Homotetramer.

The catalysed reaction is UTP + L-glutamine + ATP + H2O = CTP + L-glutamate + ADP + phosphate + 2 H(+). It catalyses the reaction L-glutamine + H2O = L-glutamate + NH4(+). It carries out the reaction UTP + NH4(+) + ATP = CTP + ADP + phosphate + 2 H(+). It functions in the pathway pyrimidine metabolism; CTP biosynthesis via de novo pathway; CTP from UDP: step 2/2. With respect to regulation, allosterically activated by GTP, when glutamine is the substrate; GTP has no effect on the reaction when ammonia is the substrate. The allosteric effector GTP functions by stabilizing the protein conformation that binds the tetrahedral intermediate(s) formed during glutamine hydrolysis. Inhibited by the product CTP, via allosteric rather than competitive inhibition. Catalyzes the ATP-dependent amination of UTP to CTP with either L-glutamine or ammonia as the source of nitrogen. Regulates intracellular CTP levels through interactions with the four ribonucleotide triphosphates. This is CTP synthase from Rhodopseudomonas palustris (strain BisA53).